We begin with the raw amino-acid sequence, 151 residues long: Protein NrdI (151 aa).

Belongs to the NrdI family.

Functionally, probably involved in ribonucleotide reductase function. The polypeptide is Protein NrdI (Mesoplasma florum (strain ATCC 33453 / NBRC 100688 / NCTC 11704 / L1) (Acholeplasma florum)).